We begin with the raw amino-acid sequence, 280 residues long: Polyamine aminopropyltransferase (280 aa).

One can recognise a PABS domain in the interval 2 to 235; sequence GGWIDEEHRG…GWWSWTFAAV (234 aa). Residue Gln-29 coordinates S-methyl-5'-thioadenosine. 2 residues coordinate spermidine: His-60 and Asp-84. Residues Glu-104 and 136-137 each bind S-methyl-5'-thioadenosine; that span reads DG. Catalysis depends on Asp-155, which acts as the Proton acceptor. S-methyl-5'-thioadenosine is bound at residue Pro-162.

Belongs to the spermidine/spermine synthase family. In terms of assembly, homodimer or homotetramer.

It is found in the cytoplasm. It catalyses the reaction S-adenosyl 3-(methylsulfanyl)propylamine + putrescine = S-methyl-5'-thioadenosine + spermidine + H(+). The protein operates within amine and polyamine biosynthesis; spermidine biosynthesis; spermidine from putrescine: step 1/1. In terms of biological role, catalyzes the irreversible transfer of a propylamine group from the amino donor S-adenosylmethioninamine (decarboxy-AdoMet) to putrescine (1,4-diaminobutane) to yield spermidine. The chain is Polyamine aminopropyltransferase from Parasynechococcus marenigrum (strain WH8102).